The primary structure comprises 514 residues: MTDKLIIFDTTLRDGEQSPGASMTKEEKIRIAKHLERMKVDVIEAGFAASSNGDFDAIHTIAGLVKDSTICSLARANDKDIQRAADALKPASSARIHTFIATSPLHMEKKLRMTPDQVFEQARLAVRFARKFTDNVEFSPEDGSRSDLDFLCRVLEAVIAEGATTINIADTVGYGVPELYGNLVKTLRERIPNSDKAIFSVHCHNDLGMAVANSLAGVKIGGARQVECTINGLGERAGNTSLEEIVMAVKTRKDYFGLDVGIDTTQIVPTSKLVSQITGFVVQPNKAVVGANAFAHASGIHQDGVLKARDTYEIMRAEDVGWTANKIVLGKLSGRNAFKQRLQELGVSLDSEAELNAAFMRFKDLADRKAEIFDEDIIAIVSEESALAQEQEHVKFVSLSQHSETGEQPQAKVVFAVEGSEVTGEARGNGPVDATFNAIEGEVGSGSELLLYSVNAITTGTQAQGEVTVRLSKNGRIVNGVGTDPDIVAASAKAYIAALNKLHSKDDKLNPQRA.

In terms of domain architecture, Pyruvate carboxyltransferase spans 5-268; it reads LIIFDTTLRD…DVGIDTTQIV (264 aa). Mn(2+) is bound by residues Asp14, His202, His204, and Asn239. The interval 395 to 514 is regulatory domain; that stretch reads KFVSLSQHSE…KDDKLNPQRA (120 aa).

This sequence belongs to the alpha-IPM synthase/homocitrate synthase family. LeuA type 1 subfamily. In terms of assembly, homodimer. Mn(2+) is required as a cofactor.

Its subcellular location is the cytoplasm. It catalyses the reaction 3-methyl-2-oxobutanoate + acetyl-CoA + H2O = (2S)-2-isopropylmalate + CoA + H(+). The protein operates within amino-acid biosynthesis; L-leucine biosynthesis; L-leucine from 3-methyl-2-oxobutanoate: step 1/4. Catalyzes the condensation of the acetyl group of acetyl-CoA with 3-methyl-2-oxobutanoate (2-ketoisovalerate) to form 3-carboxy-3-hydroxy-4-methylpentanoate (2-isopropylmalate). The protein is 2-isopropylmalate synthase of Burkholderia vietnamiensis (strain G4 / LMG 22486) (Burkholderia cepacia (strain R1808)).